Here is a 354-residue protein sequence, read N- to C-terminus: MTPPTMLQTAPVESFNLNPKSTQQAINLKSDAKNGKVSFADWNEFKFAPIRESTVSRAMTRRYFADLDKFAESDIVIIGAGSAGLSAAYTLGKNRPDLKIAIIEASVSPGGGCWLGGQLFSAMVLRKPAHLFLDDMGLDYEDEGDYVVVKHAALFMSTLMSKVLQFPNIKLFNATAVEDLITRKDPATNLQRIAGVVVNWAQLDHDTQSCMDPNTINCNVVLSTSGHDGPFGAFTAKRLEQLGRAPRDVTAGFTKPSITTSKLQEPEPISNFQLGGMKGLDMNKAEDAIVKGTREVVPGLVIAGMELAEVDGSNRMRPTFGAMALSGVKAAESVLNVLELRKQQNEACYGAYKG.

Substrate is bound by residues Ala83, 104–105 (EA), Gly112, and Val177. The residue at position 210 (Cys210) is a 2,3-didehydroalanine (Cys). Substrate is bound by residues Asp212, His227, Met305, and 315–317 (RMR).

This sequence belongs to the THI4 family. Homooctamer. The cofactor is Fe cation. Post-translationally, during the catalytic reaction, a sulfide is transferred from Cys-210 to a reaction intermediate, generating a dehydroalanine residue.

Its subcellular location is the cytoplasm. It localises to the nucleus. The catalysed reaction is [ADP-thiazole synthase]-L-cysteine + glycine + NAD(+) = [ADP-thiazole synthase]-dehydroalanine + ADP-5-ethyl-4-methylthiazole-2-carboxylate + nicotinamide + 3 H2O + 2 H(+). Its function is as follows. Involved in biosynthesis of the thiamine precursor thiazole. Catalyzes the conversion of NAD and glycine to adenosine diphosphate 5-(2-hydroxyethyl)-4-methylthiazole-2-carboxylic acid (ADT), an adenylated thiazole intermediate. The reaction includes an iron-dependent sulfide transfer from a conserved cysteine residue of the protein to a thiazole intermediate. The enzyme can only undergo a single turnover, which suggests it is a suicide enzyme. May have additional roles in adaptation to various stress conditions and in DNA damage tolerance. This is Thiamine thiazole synthase from Candida albicans (strain WO-1) (Yeast).